The sequence spans 165 residues: Transcription factor E (165 aa).

The HTH TFE/IIEalpha-type domain maps to 5-87 (NDPVVRGYLL…LWQLDLSDIE (83 aa)).

This sequence belongs to the TFE family. In terms of assembly, monomer. Interaction with RNA polymerase subunits RpoF and RpoE is necessary for Tfe stimulatory transcription activity. Able to interact with Tbp and RNA polymerase in the absence of DNA promoter. Interacts both with the preinitiation and elongation complexes.

Its function is as follows. Transcription factor that plays a role in the activation of archaeal genes transcribed by RNA polymerase. Facilitates transcription initiation by enhancing TATA-box recognition by TATA-box-binding protein (Tbp), and transcription factor B (Tfb) and RNA polymerase recruitment. Not absolutely required for transcription in vitro, but particularly important in cases where Tbp or Tfb function is not optimal. It dynamically alters the nucleic acid-binding properties of RNA polymerases by stabilizing the initiation complex and destabilizing elongation complexes. Seems to translocate with the RNA polymerase following initiation and acts by binding to the non template strand of the transcription bubble in elongation complexes. The sequence is that of Transcription factor E from Methanococcoides burtonii (strain DSM 6242 / NBRC 107633 / OCM 468 / ACE-M).